Consider the following 741-residue polypeptide: Mitofusin-1 (741 aa).

At 1–584 the chain is on the cytoplasmic side; the sequence is MAETVSPLKH…AAQEELMITL (584 aa). The interval 9–73 is part of a helix bundle domain, formed by helices from N-terminal and C-terminal regions; sequence KHFVLAKKAI…LAVIGEVLSR (65 aa). The 250-residue stretch at 72-321 folds into the Dynamin-type G domain; the sequence is SRRHMKVAFF…ARLQEFQNFE (250 aa). A G1 motif region spans residues 82–89; sequence GRTSSGKS. Residue 85-90 coordinates GTP; the sequence is SSGKSS. The G2 motif stretch occupies residues 108 to 109; the sequence is TT. Residues 178 to 181 are G3 motif; sequence DSPG. 237 to 240 serves as a coordination point for GTP; it reads NRWD. The segment at 237–240 is G4 motif; sequence NRWD. A region of interest (G5 motif) is located at residue Glu-266. Positions 284 and 286 each coordinate GTP. Residues 338 to 364 are part of a helix bundle domain, formed by helices from N-terminal and C-terminal regions; it reads EQHTIRAKQILDTVKNILDSVNVAAAE. A coiled-coil region spans residues 371–408; that stretch reads EEREDQIDRLDFIRNQMNLLTLDVKKKIKEVTEEVANK. A helical transmembrane segment spans residues 585-605; that stretch reads ITGLASLTSRTSMGIIVVGGV. Residues 606 to 608 are Mitochondrial intermembrane-facing; it reads IWK. The helical transmembrane segment at 609-629 threads the bilayer; it reads TVGWKLISVTLSMYGALYLYE. Topologically, residues 630-741 are cytoplasmic; it reads RLTWTTRAKE…QFLHPSSGES (112 aa). A coiled-coil region spans residues 677–735; it reads FARLCQQVDVTQKHLEEEIARLSKEIDQLEKIQNNSKLLRNKAVQLESELENFSKQFLH. The part of a helix bundle domain, formed by helices from N-terminal and C-terminal regions stretch occupies residues 703-734; the sequence is DQLEKIQNNSKLLRNKAVQLESELENFSKQFL.

Belongs to the TRAFAC class dynamin-like GTPase superfamily. Dynamin/Fzo/YdjA family. Mitofusin subfamily. In terms of assembly, homodimer, also in the absence of bound GTP. Forms higher oligomers in the presence of a transition state GTP analog. Forms homomultimers and heteromultimers with MFN2. Oligomerization is essential for mitochondrion fusion. Component of a high molecular weight multiprotein complex. Interacts with VAT1. Interacts with THG1L; THG1L probably functions as a guanyl-nucleotide exchange factor/GEF, activating MFN1. In terms of processing, ubiquitinated by MARCHF5. When mitochondria are depolarized and dysfunctional, it is ubiquitinated by a SCF (SKP1-CUL1-F-box protein) E3 ubiquitin-protein ligase complex that contains FBXO7 and PRKN. Ubiquitinated by non-degradative ubiquitin by PRKN, promoting mitochondrial fusion; deubiquitination by USP30 inhibits mitochondrial fusion. As to expression, detected in adult heart. Detected in embryos (at protein level). Widely expressed.

Its subcellular location is the mitochondrion outer membrane. It carries out the reaction GTP + H2O = GDP + phosphate + H(+). In terms of biological role, mitochondrial outer membrane GTPase that mediates mitochondrial clustering and fusion. Membrane clustering requires GTPase activity. It may involve a major rearrangement of the coiled coil domains. Mitochondria are highly dynamic organelles, and their morphology is determined by the equilibrium between mitochondrial fusion and fission events. Overexpression induces the formation of mitochondrial networks (in vitro). Has low GTPase activity. This chain is Mitofusin-1 (Mfn1), found in Mus musculus (Mouse).